We begin with the raw amino-acid sequence, 519 residues long: ATP synthase subunit beta, mitochondrial (519 aa).

195–202 contributes to the ATP binding site; the sequence is GGAGVGKT.

This sequence belongs to the ATPase alpha/beta chains family. As to quaternary structure, F-type ATPases have 2 components, CF(1) - the catalytic core - and CF(0) - the membrane proton channel. CF(1) has five subunits: alpha(3), beta(3), gamma(1), delta(1), epsilon(1). CF(0) has three main subunits: a, b and c.

The protein localises to the mitochondrion. It is found in the mitochondrion inner membrane. It carries out the reaction ATP + H2O + 4 H(+)(in) = ADP + phosphate + 5 H(+)(out). In terms of biological role, mitochondrial membrane ATP synthase (F(1)F(0) ATP synthase or Complex V) produces ATP from ADP in the presence of a proton gradient across the membrane which is generated by electron transport complexes of the respiratory chain. F-type ATPases consist of two structural domains, F(1) - containing the extramembraneous catalytic core, and F(0) - containing the membrane proton channel, linked together by a central stalk and a peripheral stalk. During catalysis, ATP synthesis in the catalytic domain of F(1) is coupled via a rotary mechanism of the central stalk subunits to proton translocation. Subunits alpha and beta form the catalytic core in F(1). Rotation of the central stalk against the surrounding alpha(3)beta(3) subunits leads to hydrolysis of ATP in three separate catalytic sites on the beta subunits. This Neurospora crassa (strain ATCC 24698 / 74-OR23-1A / CBS 708.71 / DSM 1257 / FGSC 987) protein is ATP synthase subunit beta, mitochondrial (atp-2).